We begin with the raw amino-acid sequence, 454 residues long: T-box protein VegT (454 aa).

Positions 57-230 form a DNA-binding region, T-box; the sequence is LWSQFHQEGT…HNPFAKGFRE (174 aa). Positions 229–241 are enriched in basic and acidic residues; that stretch reads REQERSHKRDDVL. 2 disordered regions span residues 229–274 and 295–358; these read REQE…ATRV and ANQG…VPDS. The segment covering 308 to 325 has biased composition (polar residues); the sequence is GVNQEQQVPTSSLNFYNK.

Forms a repression complex on the promoters of the nodal/nr1 and siamois genes with the maternal factors tcf7l1/tcf3 and pouf5.1/oct-25. Interacts (via C-terminus) with tcf7l1/tcf3 (via N-terminus). Also interacts with the other POU-domain transcription factors pou5f1.2/oct-91 and pou5f1.3/oct-60.

The protein localises to the nucleus. Its function is as follows. Transcription factor required for both mesoderm and endoderm formation in the embryo; signaling determinants and concentration levels may determine which germ layer is formed. Acts together with beta-catenin to activate genes that are responsible for mesoderm induction including wnt-8, eomes t/bra, siamois, mix1 and sox17. Directly binds to promoter DNA. Patterns the mesoderm along the dorsoventral and posterior axis. Activates siamois gene transcription when alone or in combination with beta-catenin, but inhibits siamois transcription in combination with pou5f1.1/oct-25. The chain is T-box protein VegT from Xenopus borealis (Kenyan clawed frog).